Consider the following 218-residue polypeptide: Claudin-3 (218 aa).

Over 1–8 (MSMGLEIA) the chain is Cytoplasmic. The helical transmembrane segment at 9-29 (GTSLAVLGWLSTIVCCALPMW) threads the bilayer. The Extracellular segment spans residues 30–80 (RVTAFIGSSIITAQITWEGLWMNCVVQSTGQMQCKVYDSLLALPQDLQAAR). A helical transmembrane segment spans residues 81 to 101 (ALIVVSILLAAFGLLVALVGA). Residues 102–115 (QCTNCVQDDTAKAK) are Cytoplasmic-facing. Residues 116-136 (ITIVAGVLFLLAALLTLVPVS) traverse the membrane as a helical segment. At 137 to 159 (WSANTIIRDFYNPLVPDAQKREM) the chain is on the extracellular side. The chain crosses the membrane as a helical span at residues 160 to 180 (GAGLYVGWAAAALQLLGGALL). Residues 181 to 218 (CCSCPPRDKKYAPTKIVYSAPRSAGPGTSTAYDRKDYV) are Cytoplasmic-facing. Y198 carries the phosphotyrosine modification. Residues S199 and S209 each carry the phosphoserine modification. Positions 217-218 (YV) are interactions with TJP1, TJP2 and TJP3.

Belongs to the claudin family. As to quaternary structure, can form homo- and heteropolymers with other CLDN. Homopolymers interact with CLDN1 and CLDN2 homopolymers. Interacts in cis (within the same plasma membrane) with CLDN19. Directly interacts with TJP1/ZO-1, TJP2/ZO-2 and TJP3/ZO-3.

It localises to the cell junction. The protein localises to the tight junction. Its subcellular location is the cell membrane. In terms of biological role, plays a major role in tight junction-specific obliteration of the intercellular space, through calcium-independent cell-adhesion activity. The polypeptide is Claudin-3 (CLDN3) (Canis lupus familiaris (Dog)).